A 501-amino-acid chain; its full sequence is Raftlin-2 (501 aa).

Disordered regions lie at residues 1 to 20 and 196 to 239; these read MGCG…GKIF and SWNE…RKGE. The N-myristoyl glycine moiety is linked to residue G2. C3 is lipidated: S-palmitoyl cysteine. Polar residues predominate over residues 220 to 233; that stretch reads GQYQMEQNGSPTSS. A Phosphoserine modification is found at S405. Residues 407–449 are disordered; that stretch reads AQTPDKKASRHIKGEDKNKATSRSIGLDTTSSQPAESRHLPEE. A Phosphothreonine modification is found at T409. Residues 410-425 show a composition bias toward basic and acidic residues; that stretch reads PDKKASRHIKGEDKNK. The segment covering 427–441 has biased composition (polar residues); sequence TSRSIGLDTTSSQPA. S430 carries the phosphoserine modification.

The protein belongs to the raftlin family.

Its subcellular location is the cell membrane. Upon bacterial lipopolysaccharide stimulation, mediates clathrin-dependent internalization of TLR4 in dendritic cells, resulting in activation of TICAM1-mediated signaling and subsequent IFNB1 production. May regulate B-cell antigen receptor-mediated signaling. The sequence is that of Raftlin-2 (RFTN2) from Homo sapiens (Human).